The chain runs to 1264 residues: MSILYVSPHPDAFPSLRALIAARYGEAGDGPGWGGPHPRICLQPPPSSRTPFPPPRLPALEQGPGGLWVWGAPAVAQLLWPAGLGGPGGSRAAVLVQQWVSYADTELTPAACGATLPALGLRGPGQDPQAALGALGKALNPLEEWLRLHTYLAGDAPTLADLAAVTALLLPFRYVLDPSARRIWGNVTRWFNTCVRQPEFRAVLGEVVLYSGARSVTQQPGSEITAPQKTAAQLKKEAKKREKLEKFQQKQKTQQQQPAHGEKKPKPEKKEKRDPGVITYDLPTPPGEKKDVSGTMPDSYSPQYVEAAWYPWWERQGFFKPEYGRPSVSAPNPRGVFMMCIPPPNVTGSLHLGHALTNAIQDSLTRWHRMRGETTLWNPGCDHAGIATQVVVEKKLWKERGLNRHQLGREAFLQEVWKWKAEKGDRIYHQLKKLGSSLDWDRACFTMDPKLSATVTEAFVRLHEEGVIYRSTRLVNWSCTLNSAISDIEVDKKELTGRTLLSVPGYKEKVEFGVLVSFAYKVQGSDSDEEVVVATTRIETMLGDVAVAVHPKDPRYQHLKGKSVVHPFLSRSLPIVFDDFVDMEFGTGAVKITPAHDQNDYEVGQRHRLEAISIMDSKGALVNVPPPFLGLPRFEARKAVLAALKEQGLFRGIKDNPMVVPLCNRSKDVVEPLLRPQWYVRCGEMAQAASAAVTRGDLRILPEAHQRTWHSWMDNIRDWCISRQLWWGHRIPAYFITVHDPAVPPGEDPDGRYWVSGRTEAEAREKAAREFGVSPDKISLQQDEDVLDTWFSSGLFPFSIFGWPNQSEDLSVFYPGTLLETGHDILFFWVARMVMLGLKLTEKLPFREVYLHAIVRDAHGRKMSKSLGNVIDPLDVIHGVSLQGLHDQLLNSNLDPSEVEKAKEGQRADFPAGIPECGTDALRFGLCAYTSQGRDINLDVNRILGYRHFCNKLWNATKFALRGLGKGFVPSPTSKPEGHESLVDRWIRSRLAEAVRLSNEGFQAYDFPAVTTAQYSFWLYELCDVYLECLKPVLNGVDQVAADCARQTLYTCLDVGLRLLSPFMPFVTEELFQRLPRRTPNAPASLCVTPYPEPSECSWKDPEAEAALELALSITRAVRSLRADYNLTRTRPDCFLEVADEATGALASAVSAYVQTLASAGVVAVLALGAPAPQGCAVAVASDRCSIHLQLQGLVDPARELGKLQAKRSEAQRQAQRLQERRAASGYSAKVPLEVQEADEVKLQQTEAELRKVDEAIALFQKML.

S2 is subject to N-acetylserine. One can recognise a GST C-terminal domain in the interval 89–219 (GSRAAVLVQQ…YSGARSVTQQ (131 aa)). Residues 218-230 (QQPGSEITAPQKT) are compositionally biased toward polar residues. The interval 218–296 (QQPGSEITAP…GEKKDVSGTM (79 aa)) is disordered. 2 stretches are compositionally biased toward basic and acidic residues: residues 234–248 (LKKE…EKFQ) and 260–275 (HGEK…KRDP). The short motif at 344-354 (PNVTGSLHLGH) is the 'HIGH' region element. A phosphoserine mark is found at S437 and S527. Residue K645 is modified to N6-acetyllysine. The 'KMSKS' region motif lies at 862 to 866 (KMSKS). An ATP-binding site is contributed by K865.

The protein belongs to the class-I aminoacyl-tRNA synthetase family. Forms high-molecular-mass aggregates with elongation factor 1.

It carries out the reaction tRNA(Val) + L-valine + ATP = L-valyl-tRNA(Val) + AMP + diphosphate. With respect to regulation, can be regulated by protein kinase C-dependent phosphorylation. The protein is Valine--tRNA ligase (Vars1) of Rattus norvegicus (Rat).